Consider the following 152-residue polypeptide: Deoxyuridine 5'-triphosphate nucleotidohydrolase (152 aa).

Residues 71 to 73 (RSG), asparagine 84, 88 to 90 (LID), and methionine 98 contribute to the substrate site.

This sequence belongs to the dUTPase family. It depends on Mg(2+) as a cofactor.

It carries out the reaction dUTP + H2O = dUMP + diphosphate + H(+). The protein operates within pyrimidine metabolism; dUMP biosynthesis; dUMP from dCTP (dUTP route): step 2/2. Functionally, this enzyme is involved in nucleotide metabolism: it produces dUMP, the immediate precursor of thymidine nucleotides and it decreases the intracellular concentration of dUTP so that uracil cannot be incorporated into DNA. The chain is Deoxyuridine 5'-triphosphate nucleotidohydrolase from Klebsiella pneumoniae subsp. pneumoniae (strain ATCC 700721 / MGH 78578).